Consider the following 107-residue polypeptide: Cytochrome c2 (107 aa).

The heme c site is built by Cys-14, Cys-17, His-18, and Met-80.

Belongs to the cytochrome c family. In terms of processing, binds 1 heme c group covalently per subunit.

Functionally, cytochrome c2 is found mainly in purple, non-sulfur, photosynthetic bacteria where it functions as the electron donor to the oxidized bacteriochlorophyll in the photophosphorylation pathway. However, it may also have a role in the respiratory chain and is found in some non-photosynthetic bacteria. The sequence is that of Cytochrome c2 from Rhodoblastus acidophilus (Rhodopseudomonas acidophila).